The sequence spans 567 residues: TGF-beta receptor type-2 (567 aa).

The first 23 residues, 1–23, serve as a signal peptide directing secretion; it reads MGRGLLRGLWPLHIVLWTRIAST. Residues 24–166 are Extracellular-facing; the sequence is IPPHVPKSVN…SPDLLLVIIQ (143 aa). Intrachain disulfides connect Cys51-Cys84, Cys54-Cys71, Cys61-Cys67, Cys77-Cys101, Cys121-Cys136, and Cys138-Cys143. Asn70 and Asn94 each carry an N-linked (GlcNAc...) asparagine glycan. The chain crosses the membrane as a helical span at residues 167 to 187; sequence VTGVSLLPPLGIAIAVIIIFY. At 188-567 the chain is on the cytoplasmic side; that stretch reads CYRVHRQQKL…PEDGSLNTTK (380 aa). In terms of domain architecture, Protein kinase spans 244–546; the sequence is IELDTLVGKG…RFSELEHPER (303 aa). ATP contacts are provided by residues 250-258 and Lys277; that span reads VGKGRFAEV. The active-site Proton acceptor is the Asp379. A phosphoserine mark is found at Ser409, Ser548, and Ser553. The disordered stretch occupies residues 545-567; sequence ERLSGRSCSQEKIPEDGSLNTTK.

This sequence belongs to the protein kinase superfamily. TKL Ser/Thr protein kinase family. TGFB receptor subfamily. As to quaternary structure, homodimer. Heterohexamer; TGFB1, TGFB2 and TGFB3 homodimeric ligands assemble a functional receptor composed of two TGFBR1 and TGFBR2 heterodimers to form a ligand-receptor heterohexamer. The respective affinity of TGFRB1 and TGFRB2 for the ligands may modulate the kinetics of assembly of the receptor and may explain the different biological activities of TGFB1, TGFB2 and TGFB3. Component of a complex composed of TSC22D1 (via N-terminus), TGFBR1 and TGFBR2; the interaction between TSC22D1 and TGFBR1 is inhibited by SMAD7 and promoted by TGFB1. Interacts with DAXX. Interacts with DYNLT4. Interacts with ZFYVE9; ZFYVE9 recruits SMAD2 and SMAD3 to the TGF-beta receptor. Interacts with and is activated by SCUBE3; this interaction does not affect TGFB1-binding to TGFBR2. Interacts with VPS39; this interaction is independent of the receptor kinase activity and of the presence of TGF-beta. Interacts with CLU. The cofactor is Mg(2+). Mn(2+) serves as cofactor. In terms of processing, phosphorylated on a Ser/Thr residue in the cytoplasmic domain. In terms of tissue distribution, widely expressed in adult. Expressed primarily in mesenchyme and epidermis of the midgestational fetus.

The protein resides in the cell membrane. It localises to the membrane raft. It carries out the reaction L-threonyl-[receptor-protein] + ATP = O-phospho-L-threonyl-[receptor-protein] + ADP + H(+). The catalysed reaction is L-seryl-[receptor-protein] + ATP = O-phospho-L-seryl-[receptor-protein] + ADP + H(+). Transmembrane serine/threonine kinase forming with the TGF-beta type I serine/threonine kinase receptor, TGFBR1, the non-promiscuous receptor for the TGF-beta cytokines TGFB1, TGFB2 and TGFB3. Transduces the TGFB1, TGFB2 and TGFB3 signal from the cell surface to the cytoplasm and is thus regulating a plethora of physiological and pathological processes including cell cycle arrest in epithelial and hematopoietic cells, control of mesenchymal cell proliferation and differentiation, wound healing, extracellular matrix production, immunosuppression and carcinogenesis. The formation of the receptor complex composed of 2 TGFBR1 and 2 TGFBR2 molecules symmetrically bound to the cytokine dimer results in the phosphorylation and the activation of TGFRB1 by the constitutively active TGFBR2. Activated TGFBR1 phosphorylates SMAD2 which dissociates from the receptor and interacts with SMAD4. The SMAD2-SMAD4 complex is subsequently translocated to the nucleus where it modulates the transcription of the TGF-beta-regulated genes. This constitutes the canonical SMAD-dependent TGF-beta signaling cascade. Also involved in non-canonical, SMAD-independent TGF-beta signaling pathways. Its function is as follows. Has transforming growth factor beta-activated receptor activity. In Mus musculus (Mouse), this protein is TGF-beta receptor type-2 (Tgfbr2).